The sequence spans 207 residues: Putative 3-methyladenine DNA glycosylase (207 aa).

A compositionally biased stretch (low complexity) spans 182–193 (PAPAGARAARAP). The disordered stretch occupies residues 182-207 (PAPAGARAARAPAPAPRPRRPRGSGP). The segment covering 198-207 (RPRRPRGSGP) has biased composition (basic residues).

It belongs to the DNA glycosylase MPG family.

This chain is Putative 3-methyladenine DNA glycosylase, found in Anaeromyxobacter dehalogenans (strain 2CP-C).